The chain runs to 304 residues: Acetylglutamate kinase (304 aa).

Substrate contacts are provided by residues 70–71 (GG), Arg-92, and Asn-196.

Belongs to the acetylglutamate kinase family. ArgB subfamily.

The protein localises to the cytoplasm. It catalyses the reaction N-acetyl-L-glutamate + ATP = N-acetyl-L-glutamyl 5-phosphate + ADP. Its pathway is amino-acid biosynthesis; L-arginine biosynthesis; N(2)-acetyl-L-ornithine from L-glutamate: step 2/4. Its function is as follows. Catalyzes the ATP-dependent phosphorylation of N-acetyl-L-glutamate. This is Acetylglutamate kinase from Methanococcoides burtonii (strain DSM 6242 / NBRC 107633 / OCM 468 / ACE-M).